A 56-amino-acid polypeptide reads, in one-letter code: Mitoregulin (56 aa).

At 2–9 (ADVSERTL) the chain is on the mitochondrial matrix side. Residues 10–27 (QLSVLVAFASGVLLGWQA) traverse the membrane as a helical segment. Topologically, residues 28–56 (NRLRRRYLDWRKRRLQDKLAATQKKLDLA) are mitochondrial intermembrane.

In terms of assembly, interacts with mitochondrial trifunctional enzyme, a heterotetrameric complex composed of 2 HADHA subunits and 2 HADHB subunits. Interacts with cytochrome b5 reductase CYB5R3; the interaction is required to maintain cellular lipid composition and leads to stimulation of mitochondrial respiratory complex I activity. Interacts with ATP synthase subunit ATP5F1B/ATP5B.

The protein localises to the mitochondrion inner membrane. Functionally, positively regulates mitochondrial complex assembly and/or stability. Increases mitochondrial membrane potential while decreasing mitochondrial reactive oxygen species. Increases mitochondrial respiration rate. Increased mitochondrial respiratory activity promotes myogenic differentiation which facilitates muscle growth and regeneration. Increases mitochondrial calcium retention capacity. Plays a role in maintenance of cellular lipid composition through its interaction with cytochrome b5 reductase CYB5R3 which is required for mitochondrial respiratory complex I activity. Interacts with the mitochondrial trifunctional enzyme complex (MTE) and enhances fatty acid beta-oxidation. Not required for MTE formation or stability. Modulates triglyceride clearance in adipocytes through its role in regulating fatty acid beta-oxidation and lipolysis. The sequence is that of Mitoregulin from Homo sapiens (Human).